An 84-amino-acid chain; its full sequence is Metallothionein-like protein 2C (84 aa).

Belongs to the metallothionein superfamily. Type 15 family.

The protein localises to the cytoplasm. Its subcellular location is the cytosol. Metallothioneins have a high content of cysteine residues that bind various heavy metals. Acts as a reactive oxygen species (ROS) scavenger in the cytosol. Possesses superoxide anion and hydroxyl radical scavenging activities in vitro. Plays a role during root development, lateral root initiation and seed embryo germination, possibly by regulating levels of cytokinin. The sequence is that of Metallothionein-like protein 2C (MT2C) from Oryza sativa subsp. indica (Rice).